A 96-amino-acid polypeptide reads, in one-letter code: Co-chaperonin GroES (96 aa).

Belongs to the GroES chaperonin family. In terms of assembly, heptamer of 7 subunits arranged in a ring. Interacts with the chaperonin GroEL.

The protein localises to the cytoplasm. In terms of biological role, together with the chaperonin GroEL, plays an essential role in assisting protein folding. The GroEL-GroES system forms a nano-cage that allows encapsulation of the non-native substrate proteins and provides a physical environment optimized to promote and accelerate protein folding. GroES binds to the apical surface of the GroEL ring, thereby capping the opening of the GroEL channel. The protein is Co-chaperonin GroES of Leptospira interrogans serogroup Icterohaemorrhagiae serovar copenhageni (strain Fiocruz L1-130).